The sequence spans 257 residues: Glutamate racemase (257 aa).

Residues Asp12–Ser13 and Tyr44–Gly45 contribute to the substrate site. Cys75 serves as the catalytic Proton donor/acceptor. Asn76–Thr77 is a binding site for substrate. Cys185 functions as the Proton donor/acceptor in the catalytic mechanism. Thr186 to His187 contributes to the substrate binding site.

This sequence belongs to the aspartate/glutamate racemases family.

The catalysed reaction is L-glutamate = D-glutamate. It functions in the pathway cell wall biogenesis; peptidoglycan biosynthesis. In terms of biological role, provides the (R)-glutamate required for cell wall biosynthesis. This is Glutamate racemase from Clostridium botulinum (strain Loch Maree / Type A3).